We begin with the raw amino-acid sequence, 20 residues long: T cell receptor alpha joining 3 (20 aa).

Alpha-beta TR is a heterodimer composed of an alpha and beta chain; disulfide-linked. The alpha-beta TR is associated with the transmembrane signaling CD3 coreceptor proteins to form the TR-CD3 (TcR or TCR). The assembly of alpha-beta TR heterodimers with CD3 occurs in the endoplasmic reticulum where a single alpha-beta TR heterodimer associates with one CD3D-CD3E heterodimer, one CD3G-CD3E heterodimer and one CD247 homodimer forming a stable octameric structure. CD3D-CD3E and CD3G-CD3E heterodimers preferentially associate with TR alpha and TR beta chains, respectively. The association of the CD247 homodimer is the last step of TcR assembly in the endoplasmic reticulum and is required for transport to the cell surface.

The protein resides in the cell membrane. J region of the variable domain of T cell receptor (TR) alpha chain that participates in the antigen recognition. Alpha-beta T cell receptors are antigen specific receptors which are essential to the immune response and are present on the cell surface of T lymphocytes. Recognize peptide-major histocompatibility (MH) (pMH) complexes that are displayed by antigen presenting cells (APC), a prerequisite for efficient T cell adaptive immunity against pathogens. Binding of alpha-beta TR to pMH complex initiates TR-CD3 clustering on the cell surface and intracellular activation of LCK that phosphorylates the ITAM motifs of CD3G, CD3D, CD3E and CD247 enabling the recruitment of ZAP70. In turn ZAP70 phosphorylates LAT, which recruits numerous signaling molecules to form the LAT signalosome. The LAT signalosome propagates signal branching to three major signaling pathways, the calcium, the mitogen-activated protein kinase (MAPK) kinase and the nuclear factor NF-kappa-B (NF-kB) pathways, leading to the mobilization of transcription factors that are critical for gene expression and essential for T cell growth and differentiation. The T cell repertoire is generated in the thymus, by V-(D)-J rearrangement. This repertoire is then shaped by intrathymic selection events to generate a peripheral T cell pool of self-MH restricted, non-autoaggressive T cells. Post-thymic interaction of alpha-beta TR with the pMH complexes shapes TR structural and functional avidity. The protein is T cell receptor alpha joining 3 of Homo sapiens (Human).